Here is a 219-residue protein sequence, read N- to C-terminus: Protein matrimony (219 aa).

Residues 74–99 (PPAKAHPHPHQHQHHHHHHKHIHRTQ) show a composition bias toward basic residues. Positions 74–104 (PPAKAHPHPHQHQHHHHHHKHIHRTQLKPPP) are disordered. Positions 159 to 219 (NHAANVEQIL…NRIMDVLQTL (61 aa)) constitute an SAM domain.

Interacts with polo. Interacts with cort. Probably ubiquitinated: degraded during the oocyte-to-embryo transition by the anaphase promoting complex/cyclosome (APC/C) containing cort protein.

Its subcellular location is the nucleus. It localises to the chromosome. In terms of biological role, polo kinase inhibitor required to maintain G2 arrest in the meiotic cell cycle in females. Holds heterochromatically paired homologs together from the end of pachytene until metaphase I. Haploinsufficient locus for homologous achiasmate segregation and may be required for the maintenance of heterochromatic pairings. This is Protein matrimony (mtrm) from Drosophila yakuba (Fruit fly).